Consider the following 124-residue polypeptide: Small ribosomal subunit protein uS12 (124 aa).

D89 bears the 3-methylthioaspartic acid mark. The disordered stretch occupies residues 103–124 (DTAGVQKRRQGRSKYGAKRPKS). Over residues 108-124 (QKRRQGRSKYGAKRPKS) the composition is skewed to basic residues.

This sequence belongs to the universal ribosomal protein uS12 family. In terms of assembly, part of the 30S ribosomal subunit. Contacts proteins S8 and S17. May interact with IF1 in the 30S initiation complex.

With S4 and S5 plays an important role in translational accuracy. Functionally, interacts with and stabilizes bases of the 16S rRNA that are involved in tRNA selection in the A site and with the mRNA backbone. Located at the interface of the 30S and 50S subunits, it traverses the body of the 30S subunit contacting proteins on the other side and probably holding the rRNA structure together. The combined cluster of proteins S8, S12 and S17 appears to hold together the shoulder and platform of the 30S subunit. This chain is Small ribosomal subunit protein uS12, found in Methylococcus capsulatus (strain ATCC 33009 / NCIMB 11132 / Bath).